The primary structure comprises 262 residues: Flap endonuclease Xni (262 aa).

D105 lines the Mg(2+) pocket. The region spanning 164–251 (SQFLDLMALA…NINLKDFRAN (88 aa)) is the 5'-3' exonuclease domain. Residues L172, A173, P181, I183, and I186 each contribute to the K(+) site. The interaction with DNA stretch occupies residues 185-190 (GIGPKS).

The protein belongs to the Xni family. Requires Mg(2+) as cofactor. K(+) is required as a cofactor.

Its function is as follows. Has flap endonuclease activity. During DNA replication, flap endonucleases cleave the 5'-overhanging flap structure that is generated by displacement synthesis when DNA polymerase encounters the 5'-end of a downstream Okazaki fragment. This chain is Flap endonuclease Xni, found in Shewanella putrefaciens (strain CN-32 / ATCC BAA-453).